The sequence spans 335 residues: Tetraacyldisaccharide 4'-kinase (335 aa).

58–65 serves as a coordination point for ATP; the sequence is TVGGSGKT.

Belongs to the LpxK family.

It catalyses the reaction a lipid A disaccharide + ATP = a lipid IVA + ADP + H(+). It functions in the pathway glycolipid biosynthesis; lipid IV(A) biosynthesis; lipid IV(A) from (3R)-3-hydroxytetradecanoyl-[acyl-carrier-protein] and UDP-N-acetyl-alpha-D-glucosamine: step 6/6. In terms of biological role, transfers the gamma-phosphate of ATP to the 4'-position of a tetraacyldisaccharide 1-phosphate intermediate (termed DS-1-P) to form tetraacyldisaccharide 1,4'-bis-phosphate (lipid IVA). The protein is Tetraacyldisaccharide 4'-kinase of Shewanella oneidensis (strain ATCC 700550 / JCM 31522 / CIP 106686 / LMG 19005 / NCIMB 14063 / MR-1).